A 129-amino-acid chain; its full sequence is Large ribosomal subunit protein uL22 (129 aa).

Belongs to the universal ribosomal protein uL22 family. Part of the 50S ribosomal subunit.

In terms of biological role, this protein binds specifically to 23S rRNA; its binding is stimulated by other ribosomal proteins, e.g. L4, L17, and L20. It is important during the early stages of 50S assembly. It makes multiple contacts with different domains of the 23S rRNA in the assembled 50S subunit and ribosome. Functionally, the globular domain of the protein is located near the polypeptide exit tunnel on the outside of the subunit, while an extended beta-hairpin is found that lines the wall of the exit tunnel in the center of the 70S ribosome. The sequence is that of Large ribosomal subunit protein uL22 from Rhizobium meliloti (strain 1021) (Ensifer meliloti).